Reading from the N-terminus, the 739-residue chain is Elongation factor 2 (739 aa).

One can recognise a tr-type G domain in the interval 19–261; sequence RNIRNIGIIA…MVALHVPDPI (243 aa). GTP is bound by residues 28–35, 94–98, and 148–151; these read AHVDHGKT, DTPGH, and NKID. Position 603 is a diphthamide (His603).

The protein belongs to the TRAFAC class translation factor GTPase superfamily. Classic translation factor GTPase family. EF-G/EF-2 subfamily.

Its subcellular location is the cytoplasm. Its function is as follows. Catalyzes the GTP-dependent ribosomal translocation step during translation elongation. During this step, the ribosome changes from the pre-translocational (PRE) to the post-translocational (POST) state as the newly formed A-site-bound peptidyl-tRNA and P-site-bound deacylated tRNA move to the P and E sites, respectively. Catalyzes the coordinated movement of the two tRNA molecules, the mRNA and conformational changes in the ribosome. This Korarchaeum cryptofilum (strain OPF8) protein is Elongation factor 2.